The sequence spans 165 residues: Endoribonuclease YbeY (165 aa).

Residues His126, His130, and His136 each coordinate Zn(2+).

The protein belongs to the endoribonuclease YbeY family. Requires Zn(2+) as cofactor.

The protein resides in the cytoplasm. Functionally, single strand-specific metallo-endoribonuclease involved in late-stage 70S ribosome quality control and in maturation of the 3' terminus of the 16S rRNA. This is Endoribonuclease YbeY from Ruegeria pomeroyi (strain ATCC 700808 / DSM 15171 / DSS-3) (Silicibacter pomeroyi).